Reading from the N-terminus, the 68-residue chain is DNA-directed RNA polymerase subunit omega (68 aa).

The protein belongs to the RNA polymerase subunit omega family. As to quaternary structure, the RNAP catalytic core consists of 2 alpha, 1 beta, 1 beta' and 1 omega subunit. When a sigma factor is associated with the core the holoenzyme is formed, which can initiate transcription.

It carries out the reaction RNA(n) + a ribonucleoside 5'-triphosphate = RNA(n+1) + diphosphate. Its function is as follows. Promotes RNA polymerase assembly. Latches the N- and C-terminal regions of the beta' subunit thereby facilitating its interaction with the beta and alpha subunits. In Desulforapulum autotrophicum (strain ATCC 43914 / DSM 3382 / VKM B-1955 / HRM2) (Desulfobacterium autotrophicum), this protein is DNA-directed RNA polymerase subunit omega.